The following is a 966-amino-acid chain: Alanine--tRNA ligase (966 aa).

Residues His646, His650, Cys750, and His754 each coordinate Zn(2+). Positions 927–949 (DRLGGGGGGRPSLASAGGRDPEA) are disordered.

It belongs to the class-II aminoacyl-tRNA synthetase family. The cofactor is Zn(2+).

It is found in the cytoplasm. The catalysed reaction is tRNA(Ala) + L-alanine + ATP = L-alanyl-tRNA(Ala) + AMP + diphosphate. Catalyzes the attachment of alanine to tRNA(Ala) in a two-step reaction: alanine is first activated by ATP to form Ala-AMP and then transferred to the acceptor end of tRNA(Ala). Also edits incorrectly charged Ser-tRNA(Ala) and Gly-tRNA(Ala) via its editing domain. The chain is Alanine--tRNA ligase from Salinibacter ruber (strain DSM 13855 / M31).